Reading from the N-terminus, the 229-residue chain is Prolactin (229 aa).

The signal sequence occupies residues 1 to 30 (MDKKGWSLKGSLLPLLLLVSDLLLCQSVAS). C34 and C41 are joined by a disulfide. A phosphoserine mark is found at S56, S64, and S120. 2 disulfides stabilise this stretch: C88–C204 and C221–C229.

The protein belongs to the somatotropin/prolactin family. In terms of assembly, interacts with PRLR.

Its subcellular location is the secreted. Functionally, prolactin acts primarily on the mammary gland by promoting lactation. The sequence is that of Prolactin (PRL) from Ailuropoda melanoleuca (Giant panda).